Consider the following 404-residue polypeptide: G1/S-specific cyclin-E2 (404 aa).

Residues 1 to 44 (MSRRSSRLQAKQQPQPSQTESPQEAQIIQAKKRKTTQDVKKRRE) are disordered. The span at 12 to 26 (QQPQPSQTESPQEAQ) shows a compositional bias: low complexity. The residue at position 21 (S21) is a Phosphoserine. A compositionally biased stretch (basic and acidic residues) spans 35–44 (TTQDVKKRRE). K348 carries the post-translational modification N6-lactoyllysine. Position 383 is a phosphoserine (S383). T392 carries the post-translational modification Phosphothreonine.

This sequence belongs to the cyclin family. Cyclin E subfamily. Interacts with the CDK2 (in vivo) and CDK3 (in vitro) protein kinases to form a serine/threonine kinase holoenzyme complex. The cyclin subunit imparts substrate specificity to the complex. Post-translationally, phosphorylation by CDK2 triggers its release from CDK2 and degradation via the ubiquitin proteasome pathway. In terms of processing, lactylated at Lys-348. Delactylated by SIRT3. As to expression, according to PubMed:9858585, highest levels of expression in adult testis, thymus and brain. Lower levels in placenta, spleen and colon. Consistently elevated levels in tumor-derived cells compared to non-transformed proliferating cells. According to PubMed:9840927: low levels in thymus, prostate, brain, skeletal muscle, and kidney. Elevated levels in lung. According to PubMed:9840943 highly expressed in testis, placenta, thymus and brain. In a lesser extent in small intestine and colon.

The protein localises to the nucleus. In terms of biological role, essential for the control of the cell cycle at the late G1 and early S phase. This chain is G1/S-specific cyclin-E2 (CCNE2), found in Homo sapiens (Human).